Here is a 657-residue protein sequence, read N- to C-terminus: MLSSTFVRSKAGLVPVILAALILAACTGDAPQTPPPVNIQDEASANSDYYLQQLQQSSDDNKADWQLLAIRALLREAKVPQAAEQLSTLPANLSDTQRQEQQLLAAELLIAQKNTPAAADILAKLEATQLSANQKVRYYQAQIAANQDKATLPLIRAFIAQEPLLTDKAHQDNIDGTWQSLSQLTPQELNTMVINADENVLQGWLDLLRVYQDNKQDPKLLKAGIKDWQTRYPQNPAAKNLPTALTQISNFSQASTAKIALLLPLSGPAQVFADAIQQGFTAAQNGSAVTASVPVTPNVTESSPTDTAAVVSDDTPATLPAPVPPPVVTNAQVKIYDTNTQPLAALLAQAQQDGATLVVGPLLKPEVEQLSATPSTLNILALNQPEASNNSPNICYFALSPEDEARDAAHHLWEQQKRMPLLLVPRGALGERIAKAFADEWQKQGGQTVLQQNFGSTTELKQSINSGAGIRLTGTPVSVSNVAAAPASVTIAGLTIPAPPIDAPVVSTSSSGNIDAVYIIATPSELTLIKPMIDMATSSRSKPALFASSRSYQAGAGPDYRLEMEGIQFSDIPLMAGSNPALLQQASAKYANDYSLVRLYAMGIDAWALANHFSEMRQIPGFQVKGVTGDLTASSDCVITRKLPWLQYRQGMVVPLA.

The first 25 residues, 1-25 (MLSSTFVRSKAGLVPVILAALILAA), serve as a signal peptide directing secretion. A lipid anchor (N-palmitoyl cysteine) is attached at Cys-26. A lipid anchor (S-diacylglycerol cysteine) is attached at Cys-26.

It belongs to the LpoA family. In terms of assembly, interacts with PBP1a.

It localises to the cell outer membrane. Its function is as follows. Regulator of peptidoglycan synthesis that is essential for the function of penicillin-binding protein 1A (PBP1a). This Yersinia pestis bv. Antiqua (strain Angola) protein is Penicillin-binding protein activator LpoA.